The chain runs to 267 residues: Tryptophan synthase alpha chain (267 aa).

Active-site proton acceptor residues include Glu49 and Asp60.

This sequence belongs to the TrpA family. As to quaternary structure, tetramer of two alpha and two beta chains.

It catalyses the reaction (1S,2R)-1-C-(indol-3-yl)glycerol 3-phosphate + L-serine = D-glyceraldehyde 3-phosphate + L-tryptophan + H2O. It functions in the pathway amino-acid biosynthesis; L-tryptophan biosynthesis; L-tryptophan from chorismate: step 5/5. Its function is as follows. The alpha subunit is responsible for the aldol cleavage of indoleglycerol phosphate to indole and glyceraldehyde 3-phosphate. The protein is Tryptophan synthase alpha chain of Acaryochloris marina (strain MBIC 11017).